A 159-amino-acid polypeptide reads, in one-letter code: Vesicle transport protein SFT2A (159 aa).

Residues 1–36 lie on the Cytoplasmic side of the membrane; sequence MEKLRRVLSGQDDEEQGLTAQVLDASSLSFNTRLKW. Serine 9 carries the phosphoserine modification. Residues 37 to 57 form a helical membrane-spanning segment; the sequence is FVICFVAGIFFSFLGTGLLWL. Residues 58–62 lie on the Lumenal side of the membrane; the sequence is PNGMK. The chain crosses the membrane as a helical span at residues 63–83; sequence LFAVFYTLGNLAALASTCFLM. Topologically, residues 84–97 are cytoplasmic; the sequence is GPVKQLKKMFETTR. Residues 98-118 form a helical membrane-spanning segment; it reads LLATIIMLLCLVFTLCAALWW. At 119-122 the chain is on the lumenal side; sequence RKKG. A helical transmembrane segment spans residues 123-143; sequence LALLFCILQFLSMTWYSLSYI. The Cytoplasmic segment spans residues 144–159; that stretch reads PYARDAVLKCCSSLLG.

Belongs to the SFT2 family.

It is found in the membrane. In terms of biological role, may be involved in fusion of retrograde transport vesicles derived from an endocytic compartment with the Golgi complex. This chain is Vesicle transport protein SFT2A, found in Mus musculus (Mouse).